A 175-amino-acid chain; its full sequence is MENLPPGYRPNVGVCLINSDNLVFVASRLNVPGAWQMPQGGIEDGEDPKSAAMRELQEETGVVSAEIVSEVPNWLTYDFPPAVKAKVNRLWGGEWHGQAQKWYLVRLRNDEDEKEINLANNEADSEFAEWKWAKPEEVVEQAVDYKRPTYEEVIKTFGSFLNDTGRAAKCKSAKW.

Positions 7-155 (GYRPNVGVCL…KRPTYEEVIK (149 aa)) constitute a Nudix hydrolase domain. 3 residues coordinate Mn(2+): Gly40, Glu55, and Glu59. The short motif at 40 to 61 (GGIEDGEDPKSAAMRELQEETG) is the Nudix box element.

The protein belongs to the Nudix hydrolase family. It depends on Mn(2+) as a cofactor.

The catalysed reaction is P(1),P(4)-bis(5'-guanosyl) tetraphosphate + H2O = GMP + GTP + 2 H(+). Its function is as follows. Mediates the hydrolysis of diadenosine 5',5''-P(1)P(4) tetraphosphate (Ap(4)A), a signaling molecule involved in regulation of DNA replication and repair. This is Nudix hydrolase 25 from Arabidopsis thaliana (Mouse-ear cress).